The sequence spans 618 residues: Glutamine--fructose-6-phosphate aminotransferase [isomerizing] (618 aa).

Residue Cys-2 is the Nucleophile; for GATase activity of the active site. The region spanning 2-226 is the Glutamine amidotransferase type-2 domain; that stretch reads CGIVGYAGRN…DFETAVLTPD (225 aa). Positions 72–91 are disordered; it reads WATHGRPSTENAHPHNSGGN. SIS domains are found at residues 295-434 and 467-608; these read NDDE…VRGK and CAEN…IDKP. The active-site For Fru-6P isomerization activity is Lys-613.

Homodimer.

The protein localises to the cytoplasm. The catalysed reaction is D-fructose 6-phosphate + L-glutamine = D-glucosamine 6-phosphate + L-glutamate. Catalyzes the first step in hexosamine metabolism, converting fructose-6P into glucosamine-6P using glutamine as a nitrogen source. This is Glutamine--fructose-6-phosphate aminotransferase [isomerizing] from Methanosarcina mazei (strain ATCC BAA-159 / DSM 3647 / Goe1 / Go1 / JCM 11833 / OCM 88) (Methanosarcina frisia).